A 463-amino-acid chain; its full sequence is Sodium-coupled neutral amino acid transporter 7 (463 aa).

Position 28 is a phosphoserine (S28). Helical transmembrane passes span 56–76 (AVFIVVNACLGAGLLNFPAAF), 82–102 (VAAGIALQMGMLVFIISGLVI), 130–150 (LCEVAIAVYTFGTCIAFLIII), 179–199 (FTISLTAFLFILPLSIPKEIG), 206–226 (FLSVVGTWYVTAIIIIKYIWP), 240–260 (ASWMAVFNAMPTICFGFQCHV), 283–303 (AAMVIALAVYMGTGICGFLTF), 320–340 (VAVAVARAFIILSVLTSYPIL), 372–392 (VLQTLVWFLLTLLLALFIPDI), 396–416 (ISVIGGLAACFIFIFPGLCLI), and 429–449 (ASWWALVSYGVLLVTLGAFIF).

It belongs to the amino acid/polyamine transporter 2 family. As to quaternary structure, interacts with the mTORC1 complex; this interaction mediates the recruitment of mTORC1 to the lysosome and its subsequent activation. As to expression, highly expressed in the brain, including the hippocampus, especially in the granular layer of dentate gyrus cells and the pyramidal cell layer of the hippocampus, amygdala, thalamus, hypothalamus, in the layer of Purkinje cells in the cerebellum and the layers of cortex. Particularly strong expression in neurons of the ventromedial hypothalamus, basolateral amygdala, ventral tegmental area, and locus coeruleus. Not detected in glial cells, including astrocytes. In addition to brain, also expressed in the spinal cord (at protein level).

It localises to the lysosome membrane. Its subcellular location is the cell projection. It is found in the axon. It carries out the reaction L-glutamine(in) + Na(+)(in) = L-glutamine(out) + Na(+)(out). The enzyme catalyses L-asparagine(in) + Na(+)(in) = L-asparagine(out) + Na(+)(out). Its function is as follows. Symporter that selectively cotransports sodium ions and amino acids, such as L-glutamine and L-asparagine from the lysosome into the cytoplasm and may participates in mTORC1 activation. The transport activity requires an acidic lysosomal lumen. The sequence is that of Sodium-coupled neutral amino acid transporter 7 from Mus musculus (Mouse).